Consider the following 143-residue polypeptide: Putative complexin-1 (143 aa).

The disordered stretch occupies residues Asn-15–Lys-71. Basic and acidic residues-rich tracts occupy residues Leu-23–Thr-33 and Leu-44–Lys-71. Positions Val-40–Lys-71 form a coiled coil.

The protein belongs to the complexin/synaphin family.

The protein resides in the cytoplasm. The protein localises to the cytosol. In terms of biological role, positively regulates a late step in synaptic vesicle exocytosis. The protein is Putative complexin-1 (cpx-1) of Caenorhabditis briggsae.